We begin with the raw amino-acid sequence, 470 residues long: Argininosuccinate lyase (470 aa).

This sequence belongs to the lyase 1 family. Argininosuccinate lyase subfamily.

The protein localises to the cytoplasm. It catalyses the reaction 2-(N(omega)-L-arginino)succinate = fumarate + L-arginine. It participates in amino-acid biosynthesis; L-arginine biosynthesis; L-arginine from L-ornithine and carbamoyl phosphate: step 3/3. This is Argininosuccinate lyase from Synechococcus sp. (strain WH7803).